The chain runs to 353 residues: Ferredoxin--NADP reductase (353 aa).

Residues Thr25, Glu44, Gln52, Tyr57, Val97, Phe132, Asp298, and Ser339 each contribute to the FAD site.

This sequence belongs to the ferredoxin--NADP reductase type 2 family. Homodimer. Requires FAD as cofactor.

The enzyme catalyses 2 reduced [2Fe-2S]-[ferredoxin] + NADP(+) + H(+) = 2 oxidized [2Fe-2S]-[ferredoxin] + NADPH. In Chlorobium phaeovibrioides (strain DSM 265 / 1930) (Prosthecochloris vibrioformis (strain DSM 265)), this protein is Ferredoxin--NADP reductase.